The chain runs to 117 residues: Zinc metalloproteinase/disintegrin (117 aa).

Residues 36-117 (TPVSGNELLE…AGCPRNPFHA (82 aa)) enclose the Disintegrin domain. 6 disulfides stabilise this stretch: cysteine 50/cysteine 65, cysteine 52/cysteine 60, cysteine 59/cysteine 82, cysteine 73/cysteine 79, cysteine 78/cysteine 103, and cysteine 91/cysteine 110. Residues 95–97 (RGD) carry the Cell attachment site motif.

Belongs to the venom metalloproteinase (M12B) family. P-II subfamily. P-IIa sub-subfamily. Monomer. It depends on Zn(2+) as a cofactor. In terms of tissue distribution, expressed by the venom gland.

It is found in the secreted. Its function is as follows. Impairs hemostasis in the envenomed animal. Inhibits platelet aggregation and bone resorption. The polypeptide is Zinc metalloproteinase/disintegrin (Gloydius halys (Chinese water mocassin)).